Consider the following 415-residue polypeptide: Multidrug resistance protein MdtA (415 aa).

An N-terminal signal peptide occupies residues 1 to 21 (MKGSYKSRWVIVIVVVIAAIA). 2 disordered regions span residues 32-56 (SRSAAPGATKQAQQSPAGGRRGMRA) and 392-415 (EAQSATTSEEKATSREYAKKGARS). Residues 399-415 (SEEKATSREYAKKGARS) show a composition bias toward basic and acidic residues.

The protein belongs to the membrane fusion protein (MFP) (TC 8.A.1) family. As to quaternary structure, part of a tripartite efflux system composed of MdtA, MdtB and MdtC.

It localises to the cell inner membrane. The MdtABC tripartite complex confers resistance against novobiocin and deoxycholate. The sequence is that of Multidrug resistance protein MdtA from Escherichia coli O7:K1 (strain IAI39 / ExPEC).